The following is a 1093-amino-acid chain: Carbamoyl phosphate synthase large chain (1093 aa).

Residues 1–412 form a carboxyphosphate synthetic domain region; that stretch reads MPRRNDIRKI…SLMKALRSLE (412 aa). The ATP site is built by Arg139, Arg179, Gly185, Gly186, Glu218, Val220, Glu225, Gly251, Val252, His253, Gln295, and Glu309. Residues 143-338 enclose the ATP-grasp 1 domain; that stretch reads KDAMTRIGLD…IAKIAAKLAV (196 aa). 3 residues coordinate Mg(2+): Gln295, Glu309, and Asn311. Residues Gln295, Glu309, and Asn311 each coordinate Mn(2+). Residues 413 to 560 are oligomerization domain; that stretch reads TGKRVGAEVL…YSSYEEEDEA (148 aa). The segment at 561-952 is carbamoyl phosphate synthetic domain; that stretch reads PQTDKRKVII…AFAKAQLSAG (392 aa). An ATP-grasp 2 domain is found at 689-880; the sequence is GKLLEQLQIP…LAKIASRLMT (192 aa). 10 residues coordinate ATP: Arg725, His764, Leu766, Glu771, Gly796, Ile797, His798, Ser799, Gln839, and Glu851. Mg(2+) is bound by residues Gln839, Glu851, and Asn853. Gln839, Glu851, and Asn853 together coordinate Mn(2+). The 141-residue stretch at 953–1093 folds into the MGS-like domain; the sequence is LILPSSGTVF…QLLHAGHAVK (141 aa). An allosteric domain region spans residues 953 to 1093; that stretch reads LILPSSGTVF…QLLHAGHAVK (141 aa).

Belongs to the CarB family. In terms of assembly, composed of two chains; the small (or glutamine) chain promotes the hydrolysis of glutamine to ammonia, which is used by the large (or ammonia) chain to synthesize carbamoyl phosphate. Tetramer of heterodimers (alpha,beta)4. Requires Mg(2+) as cofactor. Mn(2+) is required as a cofactor.

It carries out the reaction hydrogencarbonate + L-glutamine + 2 ATP + H2O = carbamoyl phosphate + L-glutamate + 2 ADP + phosphate + 2 H(+). The catalysed reaction is hydrogencarbonate + NH4(+) + 2 ATP = carbamoyl phosphate + 2 ADP + phosphate + 2 H(+). The protein operates within amino-acid biosynthesis; L-arginine biosynthesis; carbamoyl phosphate from bicarbonate: step 1/1. It participates in pyrimidine metabolism; UMP biosynthesis via de novo pathway; (S)-dihydroorotate from bicarbonate: step 1/3. In terms of biological role, large subunit of the glutamine-dependent carbamoyl phosphate synthetase (CPSase). CPSase catalyzes the formation of carbamoyl phosphate from the ammonia moiety of glutamine, carbonate, and phosphate donated by ATP, constituting the first step of 2 biosynthetic pathways, one leading to arginine and/or urea and the other to pyrimidine nucleotides. The large subunit (synthetase) binds the substrates ammonia (free or transferred from glutamine from the small subunit), hydrogencarbonate and ATP and carries out an ATP-coupled ligase reaction, activating hydrogencarbonate by forming carboxy phosphate which reacts with ammonia to form carbamoyl phosphate. The chain is Carbamoyl phosphate synthase large chain from Acidobacterium capsulatum (strain ATCC 51196 / DSM 11244 / BCRC 80197 / JCM 7670 / NBRC 15755 / NCIMB 13165 / 161).